The sequence spans 37 residues: Large ribosomal subunit protein bL36c (37 aa).

This sequence belongs to the bacterial ribosomal protein bL36 family.

Its subcellular location is the plastid. The protein localises to the chloroplast. The protein is Large ribosomal subunit protein bL36c of Tetradesmus obliquus (Green alga).